We begin with the raw amino-acid sequence, 428 residues long: Histidine--tRNA ligase (428 aa).

It belongs to the class-II aminoacyl-tRNA synthetase family. As to quaternary structure, homodimer.

It localises to the cytoplasm. It carries out the reaction tRNA(His) + L-histidine + ATP = L-histidyl-tRNA(His) + AMP + diphosphate + H(+). The sequence is that of Histidine--tRNA ligase from Chlamydia trachomatis serovar L2 (strain ATCC VR-902B / DSM 19102 / 434/Bu).